Consider the following 192-residue polypeptide: Peptide methionine sulfoxide reductase MsrA 1 (192 aa).

The active site involves Cys-25.

It belongs to the MsrA Met sulfoxide reductase family.

It catalyses the reaction L-methionyl-[protein] + [thioredoxin]-disulfide + H2O = L-methionyl-(S)-S-oxide-[protein] + [thioredoxin]-dithiol. The catalysed reaction is [thioredoxin]-disulfide + L-methionine + H2O = L-methionine (S)-S-oxide + [thioredoxin]-dithiol. Its function is as follows. Has an important function as a repair enzyme for proteins that have been inactivated by oxidation. Catalyzes the reversible oxidation-reduction of methionine sulfoxide in proteins to methionine. The sequence is that of Peptide methionine sulfoxide reductase MsrA 1 from Rhodopirellula baltica (strain DSM 10527 / NCIMB 13988 / SH1).